A 156-amino-acid chain; its full sequence is ATP synthase subunit b (156 aa).

Residues Leu-7–Leu-29 traverse the membrane as a helical segment.

It belongs to the ATPase B chain family. As to quaternary structure, F-type ATPases have 2 components, F(1) - the catalytic core - and F(0) - the membrane proton channel. F(1) has five subunits: alpha(3), beta(3), gamma(1), delta(1), epsilon(1). F(0) has three main subunits: a(1), b(2) and c(10-14). The alpha and beta chains form an alternating ring which encloses part of the gamma chain. F(1) is attached to F(0) by a central stalk formed by the gamma and epsilon chains, while a peripheral stalk is formed by the delta and b chains.

The protein localises to the cell inner membrane. F(1)F(0) ATP synthase produces ATP from ADP in the presence of a proton or sodium gradient. F-type ATPases consist of two structural domains, F(1) containing the extramembraneous catalytic core and F(0) containing the membrane proton channel, linked together by a central stalk and a peripheral stalk. During catalysis, ATP synthesis in the catalytic domain of F(1) is coupled via a rotary mechanism of the central stalk subunits to proton translocation. Its function is as follows. Component of the F(0) channel, it forms part of the peripheral stalk, linking F(1) to F(0). This is ATP synthase subunit b from Ectopseudomonas mendocina (strain ymp) (Pseudomonas mendocina).